The following is a 98-amino-acid chain: Putative protein adenylyltransferase MJ1217 (98 aa).

Positions 31–45 (GSYAREEQKETSDID) match the GSX(10)DXD motif motif. 3 residues coordinate Mg(2+): aspartate 43, aspartate 45, and aspartate 75.

This sequence belongs to the MntA antitoxin family. In terms of assembly, probably forms a complex with cognate toxin MJ1216. Requires Mg(2+) as cofactor.

It catalyses the reaction L-tyrosyl-[protein] + ATP = O-(5'-adenylyl)-L-tyrosyl-[protein] + diphosphate. The enzyme catalyses O-(5'-adenylyl)-L-tyrosyl-[protein] + ATP = O-[5'-(adenylyl-(5'-&gt;3')-adenylyl)]-L-tyrosyl-[protein] + diphosphate. Its function is as follows. Probable antitoxin component of a putative type VII toxin-antitoxin (TA) system. Neutralizes cognate toxic MJ1216 by di-AMPylation. The polypeptide is Putative protein adenylyltransferase MJ1217 (Methanocaldococcus jannaschii (strain ATCC 43067 / DSM 2661 / JAL-1 / JCM 10045 / NBRC 100440) (Methanococcus jannaschii)).